The sequence spans 575 residues: Serine/threonine-protein kinase STY46 (575 aa).

Residues 116–140 (ADLDSTSNDAGHSSPTRKSIHPPPA) are disordered. Residues 118 to 132 (LDSTSNDAGHSSPTR) are compositionally biased toward polar residues. Positions 178-252 (EITFSTEDKP…AKIELQSQSW (75 aa)) constitute an ACT domain. The Protein kinase domain occupies 290–543 (LKFGHKIASG…EIIEQLQEIA (254 aa)). Residues 296 to 304 (IASGSYGDL) and lysine 317 each bind ATP. Residue aspartate 411 is the Proton acceptor of the active site. Position 443 is a phosphothreonine (threonine 443).

This sequence belongs to the protein kinase superfamily. Ser/Thr protein kinase family. In terms of processing, autophosphorylated on serine and threonine residues. Autophosphorylated at Thr-443.

It is found in the cytoplasm. It localises to the cytosol. It carries out the reaction L-seryl-[protein] + ATP = O-phospho-L-seryl-[protein] + ADP + H(+). The enzyme catalyses L-threonyl-[protein] + ATP = O-phospho-L-threonyl-[protein] + ADP + H(+). With respect to regulation, activated by autophosphorylation at Thr-443. Serine/threonine protein kinase that specifically phosphorylates chloroplast precursor proteins in the cytosol within the cleavable presequences (transit peptides). May be part of a cytosolic regulatory network involved in chloroplast protein import. Does not phosphorylate mitochondrion precursor proteins. Specific for ATP and does not utilize other NTPs. Plays a role in chloroplast biogenesis and differentiation in cotyledons, possibly through phosphorylation of chloroplast preproteins. The chain is Serine/threonine-protein kinase STY46 from Arabidopsis thaliana (Mouse-ear cress).